Reading from the N-terminus, the 328-residue chain is MSWWTPQVAAIAFALFQAVVILLAAVGAAALLTMVERRLLGLWQDRHGPNRVGPFGVLQIVADMLKIVFKEDWIPPFADRGLFVLAPAIAMASLLLSFMVIPITPSWGVADLHIGLLFFFAMAGINVYAVLFAGWSSGNKYALLGAMRASAQTLSYEVFMGLSLMGVVAMAGSFNMREIVAAQETLWFIVPQFFGFCTFLVAGIAVTHRHPFDQPEAEQELADGYHIEYSGMKWGMFFVGEYVGIVLVSALMVTLFLGGWHGPWLPPIVWFLLKTAVFVGFFILLRAALPRPRYDAVMSFGWKVCLPLTLINLLVTGALILIFSPAGG.

Transmembrane regions (helical) follow at residues V8–A28, G81–I101, I114–G134, L154–F174, L186–V206, F237–L257, L265–L285, and V304–S324.

Belongs to the complex I subunit 1 family. NDH-1 is composed of 14 different subunits. Subunits NuoA, H, J, K, L, M, N constitute the membrane sector of the complex.

It localises to the cell inner membrane. The catalysed reaction is a quinone + NADH + 5 H(+)(in) = a quinol + NAD(+) + 4 H(+)(out). Its function is as follows. NDH-1 shuttles electrons from NADH, via FMN and iron-sulfur (Fe-S) centers, to quinones in the respiratory chain. The immediate electron acceptor for the enzyme in this species is believed to be ubiquinone. Couples the redox reaction to proton translocation (for every two electrons transferred, four hydrogen ions are translocated across the cytoplasmic membrane), and thus conserves the redox energy in a proton gradient. This subunit may bind ubiquinone. This chain is NADH-quinone oxidoreductase subunit H, found in Chromohalobacter salexigens (strain ATCC BAA-138 / DSM 3043 / CIP 106854 / NCIMB 13768 / 1H11).